A 319-amino-acid polypeptide reads, in one-letter code: Glucokinase (319 aa).

Residue 8–13 (GDIGGT) coordinates ATP.

This sequence belongs to the bacterial glucokinase family.

Its subcellular location is the cytoplasm. The catalysed reaction is D-glucose + ATP = D-glucose 6-phosphate + ADP + H(+). This Chromohalobacter salexigens (strain ATCC BAA-138 / DSM 3043 / CIP 106854 / NCIMB 13768 / 1H11) protein is Glucokinase.